We begin with the raw amino-acid sequence, 338 residues long: Probable protein S-acyltransferase 1 (338 aa).

A run of 2 helical transmembrane segments spans residues 32–52 (DASSLLLTTCMIGGPAIAFSI) and 68–88 (LTLIGAILLTFMAFTFLFLTS). A DHHC domain is found at 142 to 192 (KFCDTCQLYRPPRAFHCSICNNCVQRFDHHCPWVGQCIALRNYPFFVCFLS). Catalysis depends on Cys172, which acts as the S-palmitoyl cysteine intermediate. Helical transmembrane passes span 186–206 (FFVCFLSCSTLLCIYVFVFSW) and 225–245 (ILGVLGLYCFVSVWFVGGLTV). The disordered stretch occupies residues 319-338 (FGPKDTKMSSGKSDSEARER). Positions 320 to 338 (GPKDTKMSSGKSDSEARER) are enriched in basic and acidic residues.

The protein belongs to the DHHC palmitoyltransferase family.

It is found in the endosome membrane. It catalyses the reaction L-cysteinyl-[protein] + hexadecanoyl-CoA = S-hexadecanoyl-L-cysteinyl-[protein] + CoA. Its function is as follows. Palmitoyl acyltransferase. The protein is Probable protein S-acyltransferase 1 (PAT01) of Arabidopsis thaliana (Mouse-ear cress).